A 728-amino-acid polypeptide reads, in one-letter code: Elongation factor 2 (728 aa).

The tr-type G domain occupies 19–261 (EHIRNIAIAA…MVCEHFPNPV (243 aa)). GTP is bound by residues 28–35 (AHVDHGKT), 94–98 (DTPGH), and 148–151 (NKVD). Residue His596 is modified to Diphthamide.

Belongs to the TRAFAC class translation factor GTPase superfamily. Classic translation factor GTPase family. EF-G/EF-2 subfamily.

It is found in the cytoplasm. Functionally, catalyzes the GTP-dependent ribosomal translocation step during translation elongation. During this step, the ribosome changes from the pre-translocational (PRE) to the post-translocational (POST) state as the newly formed A-site-bound peptidyl-tRNA and P-site-bound deacylated tRNA move to the P and E sites, respectively. Catalyzes the coordinated movement of the two tRNA molecules, the mRNA and conformational changes in the ribosome. In Haloarcula marismortui (strain ATCC 43049 / DSM 3752 / JCM 8966 / VKM B-1809) (Halobacterium marismortui), this protein is Elongation factor 2.